The chain runs to 655 residues: HDA1 complex subunit 3 (655 aa).

A coiled-coil region spans residues 482–632 (HELEVENNLK…KTMDNLENLT (151 aa)). The tract at residues 635 to 655 (RVRTQNGNTKKKSRAKKPGNV) is disordered. The segment covering 643 to 655 (TKKKSRAKKPGNV) has biased composition (basic residues).

It belongs to the HDA2/3 family. HDA3 subfamily. As to quaternary structure, heterodimer with HDA2. Component of the HDA1 histone deacetylase complex composed of at least one HDA1 homodimer and one HDA2/HDA3 heterodimer. Interacts with HDA1 and HDA3.

The protein resides in the nucleus. Required for activity of HDA1 histone deacetylase complex. The HDA1 histone deacetylase complex is responsible for the deacetylation of lysine residues on the N-terminal part of the core histones (H2A, H2B, H3 and H4). Histone deacetylation gives a tag for epigenetic repression and plays an important role in transcriptional regulation, cell cycle progression and developmental events. The sequence is that of HDA1 complex subunit 3 (HDA3) from Saccharomyces cerevisiae (strain ATCC 204508 / S288c) (Baker's yeast).